A 359-amino-acid polypeptide reads, in one-letter code: 1-deoxy-D-xylulose 5-phosphate reductoisomerase (359 aa).

NADPH contacts are provided by T7, G8, S9, I10, G31, K32, N33, and N111. Residue K112 coordinates 1-deoxy-D-xylulose 5-phosphate. E113 serves as a coordination point for NADPH. D131 contributes to the Mn(2+) binding site. Residues S132, E133, S155, and H178 each coordinate 1-deoxy-D-xylulose 5-phosphate. Mn(2+) is bound at residue E133. G184 is a binding site for NADPH. Residues S191, N196, K197, and E200 each contribute to the 1-deoxy-D-xylulose 5-phosphate site. E200 lines the Mn(2+) pocket.

The protein belongs to the DXR family. It depends on Mg(2+) as a cofactor. The cofactor is Mn(2+).

The enzyme catalyses 2-C-methyl-D-erythritol 4-phosphate + NADP(+) = 1-deoxy-D-xylulose 5-phosphate + NADPH + H(+). It functions in the pathway isoprenoid biosynthesis; isopentenyl diphosphate biosynthesis via DXP pathway; isopentenyl diphosphate from 1-deoxy-D-xylulose 5-phosphate: step 1/6. Functionally, catalyzes the NADPH-dependent rearrangement and reduction of 1-deoxy-D-xylulose-5-phosphate (DXP) to 2-C-methyl-D-erythritol 4-phosphate (MEP). This Campylobacter lari (strain RM2100 / D67 / ATCC BAA-1060) protein is 1-deoxy-D-xylulose 5-phosphate reductoisomerase.